We begin with the raw amino-acid sequence, 256 residues long: UPF0246 protein TERTU_4575 (256 aa).

The protein belongs to the UPF0246 family.

The sequence is that of UPF0246 protein TERTU_4575 from Teredinibacter turnerae (strain ATCC 39867 / T7901).